Consider the following 228-residue polypeptide: Ribosomal RNA small subunit methyltransferase G (228 aa).

S-adenosyl-L-methionine-binding positions include glycine 70, leucine 75, 120 to 121 (AE), and arginine 138. Residues 207 to 228 (RRGDTRGPNRRVSPRRTGGAPA) form a disordered region.

It belongs to the methyltransferase superfamily. RNA methyltransferase RsmG family.

The protein resides in the cytoplasm. Specifically methylates the N7 position of guanine in position 518 of 16S rRNA. The sequence is that of Ribosomal RNA small subunit methyltransferase G from Mycobacterium marinum (strain ATCC BAA-535 / M).